Reading from the N-terminus, the 458-residue chain is MTAEEMKAAENGAQSAPLPLEGVDISPKQDEGVLKVIKREGTGTETPMIGDRVFVHYTGWLLDGTKFDSSLDRKDKFSFDLGKGEVIKAWDIAVATMKVGEVCHITCKPEYAYGAAGSPPKIPPNATLVFEVELFEFKGEDLTEEEDGGIIRRIRTRGEGYARPNDGAMVEVALEGYHKDRLFDQRELCFEVGEGESLDLPCGLEEAIQRMEKGEHSIVYLKPSYAFGSVGKERFQIPPHAELRYEVRLKSFEKAKESWEMSSAEKLEQSNIVKERGTAYFKEGKYKQALLQYKKIVSWLEYESSFSGEEMQKVHALRLASHLNLAMCHLKLQAFSAAIESCNKALELDSNNEKGLFRRGEAHLAVNDFDLARADFQKVLQLYPSNKAAKTQLAVCQQRTRRQLAREKKLYANMFERLAEEEHKVKAEVAAGDHPTDAEMKGERNNVAENQSRVETEA.

Methionine 1 is subject to N-acetylmethionine; in peptidyl-prolyl cis-trans isomerase FKBP4; alternate. A disordered region spans residues 1-24 (MTAEEMKAAENGAQSAPLPLEGVD). The residue at position 2 (threonine 2) is an N-acetylthreonine; in peptidyl-prolyl cis-trans isomerase FKBP4, N-terminally processed; partial. Residues 50 to 138 (GDRVFVHYTG…VFEVELFEFK (89 aa)) form the PPIase FKBP-type 1 domain. The residue at position 143 (threonine 143) is a Phosphothreonine; by CK2. In terms of domain architecture, PPIase FKBP-type 2 spans 167–253 (GAMVEVALEG…RYEVRLKSFE (87 aa)). Tyrosine 220 carries the phosphotyrosine modification. The tract at residues 267–400 (LEQSNIVKER…TQLAVCQQRT (134 aa)) is interaction with tubulin. TPR repeat units lie at residues 270–303 (SNIV…LEYE), 319–352 (LASH…DSNN), and 353–386 (EKGL…YPSN). The residue at position 282 (lysine 282) is an N6-acetyllysine. Arginine 373 carries the omega-N-methylarginine modification. Residues 428–458 (EVAAGDHPTDAEMKGERNNVAENQSRVETEA) form a disordered region. A compositionally biased stretch (basic and acidic residues) spans 434 to 458 (HPTDAEMKGERNNVAENQSRVETEA). Phosphothreonine is present on threonine 436. A Glycyl lysine isopeptide (Lys-Gly) (interchain with G-Cter in SUMO1) cross-link involves residue lysine 441. The residue at position 452 (serine 452) is a Phosphoserine.

Homodimer. Interacts with GLMN. Associates with HSP90AA1 and HSPA1A/HSPA1B in steroid hormone receptor complexes. Also interacts with peroxisomal phytanoyl-CoA alpha-hydroxylase (PHYH). Interacts with NR3C1 and dynein. Interacts with HSF1 in the HSP90 complex. Associates with tubulin. Interacts with MAPT/TAU. Interacts (via TPR domain) with S100A1, S100A2 and S100A6; the interaction is Ca(2+) dependent. Interaction with S100A1 and S100A2 (but not with S100A6) leads to inhibition of FKBP4-HSP90 interaction. Interacts with dynein; contributes to NR3C1 transport to the nucleus. Post-translationally, phosphorylation by CK2 results in loss of HSP90 binding activity.

The protein resides in the cytoplasm. The protein localises to the cytosol. It localises to the mitochondrion. Its subcellular location is the nucleus. It is found in the cytoskeleton. The enzyme catalyses [protein]-peptidylproline (omega=180) = [protein]-peptidylproline (omega=0). Its activity is regulated as follows. Inhibited by FK506. Its function is as follows. Immunophilin protein with PPIase and co-chaperone activities. Component of steroid receptors heterocomplexes through interaction with heat-shock protein 90 (HSP90). May play a role in the intracellular trafficking of heterooligomeric forms of steroid hormone receptors between cytoplasm and nuclear compartments. The isomerase activity controls neuronal growth cones via regulation of TRPC1 channel opening. Also acts as a regulator of microtubule dynamics by inhibiting MAPT/TAU ability to promote microtubule assembly. May have a protective role against oxidative stress in mitochondria. The chain is Peptidyl-prolyl cis-trans isomerase FKBP4 (Fkbp4) from Mus musculus (Mouse).